Consider the following 373-residue polypeptide: Anhydro-N-acetylmuramic acid kinase (373 aa).

Residue 13–20 (GTSMDGID) coordinates ATP.

The protein belongs to the anhydro-N-acetylmuramic acid kinase family.

It catalyses the reaction 1,6-anhydro-N-acetyl-beta-muramate + ATP + H2O = N-acetyl-D-muramate 6-phosphate + ADP + H(+). The protein operates within amino-sugar metabolism; 1,6-anhydro-N-acetylmuramate degradation. It participates in cell wall biogenesis; peptidoglycan recycling. Functionally, catalyzes the specific phosphorylation of 1,6-anhydro-N-acetylmuramic acid (anhMurNAc) with the simultaneous cleavage of the 1,6-anhydro ring, generating MurNAc-6-P. Is required for the utilization of anhMurNAc either imported from the medium or derived from its own cell wall murein, and thus plays a role in cell wall recycling. The chain is Anhydro-N-acetylmuramic acid kinase from Brucella suis (strain ATCC 23445 / NCTC 10510).